A 362-amino-acid polypeptide reads, in one-letter code: Phospho-N-acetylmuramoyl-pentapeptide-transferase (362 aa).

10 helical membrane-spanning segments follow: residues 21-41, 75-95, 100-120, 136-156, 170-190, 201-221, 225-245, 247-267, 290-310, and 339-359; these read YITF…FLLG, TMGG…WADL, VWAV…DDFL, LVVQ…LMPG, LMIP…MGAS, GLAI…AYLV, IFSH…AVFC, ALIG…AVFM, IVLA…IVQV, and TVVI…LATL.

The protein belongs to the glycosyltransferase 4 family. MraY subfamily. Requires Mg(2+) as cofactor.

Its subcellular location is the cell inner membrane. It carries out the reaction UDP-N-acetyl-alpha-D-muramoyl-L-alanyl-gamma-D-glutamyl-meso-2,6-diaminopimeloyl-D-alanyl-D-alanine + di-trans,octa-cis-undecaprenyl phosphate = di-trans,octa-cis-undecaprenyl diphospho-N-acetyl-alpha-D-muramoyl-L-alanyl-D-glutamyl-meso-2,6-diaminopimeloyl-D-alanyl-D-alanine + UMP. The protein operates within cell wall biogenesis; peptidoglycan biosynthesis. Functionally, catalyzes the initial step of the lipid cycle reactions in the biosynthesis of the cell wall peptidoglycan: transfers peptidoglycan precursor phospho-MurNAc-pentapeptide from UDP-MurNAc-pentapeptide onto the lipid carrier undecaprenyl phosphate, yielding undecaprenyl-pyrophosphoryl-MurNAc-pentapeptide, known as lipid I. This is Phospho-N-acetylmuramoyl-pentapeptide-transferase from Acidiphilium cryptum (strain JF-5).